The primary structure comprises 199 residues: Small heat shock protein hspG4 (199 aa).

In terms of domain architecture, sHSP spans 30 to 199; the sequence is NKRVDIIPSM…SSNTIKININ (170 aa). The tract at residues 83–105 is disordered; that stretch reads KNQQQQQQQQQLENSNNKENDEP.

The protein belongs to the small heat shock protein (HSP20) family.

The sequence is that of Small heat shock protein hspG4 (hspG4) from Dictyostelium discoideum (Social amoeba).